The chain runs to 73 residues: Small ribosomal subunit protein bS18 (73 aa).

This sequence belongs to the bacterial ribosomal protein bS18 family. In terms of assembly, part of the 30S ribosomal subunit. Forms a tight heterodimer with protein bS6.

Binds as a heterodimer with protein bS6 to the central domain of the 16S rRNA, where it helps stabilize the platform of the 30S subunit. This chain is Small ribosomal subunit protein bS18, found in Neorickettsia sennetsu (strain ATCC VR-367 / Miyayama) (Ehrlichia sennetsu).